Reading from the N-terminus, the 309-residue chain is Tagatose-6-phosphate kinase (309 aa).

The protein belongs to the carbohydrate kinase PfkB family. LacC subfamily.

It catalyses the reaction D-tagatofuranose 6-phosphate + ATP = D-tagatofuranose 1,6-bisphosphate + ADP + H(+). It functions in the pathway carbohydrate metabolism; D-tagatose 6-phosphate degradation; D-glyceraldehyde 3-phosphate and glycerone phosphate from D-tagatose 6-phosphate: step 1/2. The protein is Tagatose-6-phosphate kinase of Streptococcus pneumoniae serotype 19F (strain G54).